Consider the following 722-residue polypeptide: MCFFIGLVPPGYKYLGPGNSLDQGEPTNPSDAAAKEHDEAYAAYLRSGKNPYLYFSPADQRFIDQTKDATDWGGKIGHYFFRAKKAIAPVLTDTPDHPSTSRPTKPTKRSKPPPHIFINLAKKKKAGAGQVKRDNLAPMSDGAVQPDGGQPAVRNERATGSGNGSGGGGGGGSGGVGISTGTFNNQTEFKFLENGWVEITANSSRLVHLNMPESENYKRVVVNNMDKTAVKGNMALDDTHVQIVTPWSLVDANAWGVWFNPGDWQLIVNTMSELHLVSFEQEIFNVVLKTVSESATQPPTKVYNNDLTASLMVALDSNNTMPFTPAAMRSETLGFYPWKPTIPTPWRYYFQWDRTLIPSHTGTSGTPTNIYHGTDPDDVQFYTIENSVPVHLLRTGDEFATGTFFFDCKPCRLTHTWQTNRALGLPPFLNSLPQSEGATNFGDIGVQQDKRRGVTQMGNTDYITEATIMRPAEVGYSAPYYSFEASTQGPFKTPIAAGRGGAQTDENQAADGDPRYAFGRQHGQKTTTTGETPERFTYIAHQDTGRYPAGDWIQNINFNLPVTNDNVLLPTDPIGGKTGINYTNIFNTYGPLTALNNVPPVYPNGQIWDKEFDTDLKPRLHVNAPFVCQNNCPGQLFVKVAPNLTNEYDPDASANMSRIVTYSDFWWKGKLVFKAKLRASHTWNPIQQMSINVDNQFNYLPNNIGAMKIVYEKSQLAPRKLY.

The segment at 14-59 is phospholipase A2-like; it reads YLGPGNSLDQGEPTNPSDAAAKEHDEAYAAYLRSGKNPYLYFSPAD. 3 disordered regions span residues 90–115, 136–179, and 497–531; these read VLTD…PPPH, LAPM…VGIS, and AGRG…TTGE. Positions 161–178 are enriched in gly residues; that stretch reads SGNGSGGGGGGGSGGVGI.

Belongs to the parvoviridae capsid protein family.

It localises to the virion. Functionally, capsid protein self-assembles to form an icosahedral capsid with a T=1 symmetry, about 22 nm in diameter, and consisting of 60 copies of two size variants of the capsid proteins, VP1 and VP2, which differ by the presence of an N-terminal extension in the minor protein VP1. The capsid encapsulates the genomic ssDNA. Capsid proteins are responsible for the attachment to host cell receptors. This attachment induces virion internalization predominantly through clathrin-dependent endocytosis. Binding to the host receptors also induces capsid rearrangements leading to surface exposure of VP1 N-terminus, specifically its phospholipase A2-like region and putative nuclear localization signal(s). VP1 N-terminus might serve as a lipolytic enzyme to breach the endosomal membrane during entry into host cell and might contribute to virus transport to the nucleus. The polypeptide is Capsid protein VP1 (Neovison vison (American mink)).